Here is a 359-residue protein sequence, read N- to C-terminus: Small ribosomal subunit protein mS22 (359 aa).

This sequence belongs to the mitochondrion-specific ribosomal protein mS22 family. Component of the mitochondrial ribosome small subunit (28S) which comprises a 12S rRNA and about 30 distinct proteins.

It localises to the mitochondrion. The sequence is that of Small ribosomal subunit protein mS22 (MRPS22) from Bos taurus (Bovine).